The sequence spans 446 residues: Xanthone prenyltransferase A (446 aa).

R113, K199, Y201, R263, K265, Y267, Y369, and Y440 together coordinate dimethylallyl diphosphate.

Belongs to the tryptophan dimethylallyltransferase family.

It functions in the pathway secondary metabolite biosynthesis. In terms of biological role, xanthone prenyltransferase involved in the conversion of monodictyphenone to the prenyl xanthones such as emericellin, shamixanthone and epishamixanthone. Monodictyphenone is first converted to variecoxanthone A via a paeciloxanthone intermediate by the consecutive actions of the FAD-dependent monooxygenase mdpD and the xanthone prenyltransferase xptB. XptB catalyzes regular O-prenylation at the hydroxy group of C-7 of the xanthone ring. Variecoxanthone A is further prenylated to emericellin by xptA before being reduced to shamixanthone and epishamixanthone by the dehydrogenase xptC. This Emericella nidulans (strain FGSC A4 / ATCC 38163 / CBS 112.46 / NRRL 194 / M139) (Aspergillus nidulans) protein is Xanthone prenyltransferase A.